We begin with the raw amino-acid sequence, 258 residues long: UPF0246 protein HI_0984 (258 aa).

It belongs to the UPF0246 family.

The sequence is that of UPF0246 protein HI_0984 from Haemophilus influenzae (strain ATCC 51907 / DSM 11121 / KW20 / Rd).